A 386-amino-acid polypeptide reads, in one-letter code: Flap endonuclease 1 (386 aa).

Positions 1 to 104 are N-domain; sequence MGILGLSKLI…GELAKRAERR (104 aa). D34 contributes to the Mg(2+) binding site. R47 and R70 together coordinate DNA. Mg(2+)-binding residues include D86, E158, E160, D179, and D181. Positions 122 to 253 are I-domain; that stretch reads EIEKFNRRLV…KRAIELINNY (132 aa). E158 contributes to the DNA binding site. Residues G231 and D233 each coordinate DNA. A Mg(2+)-binding site is contributed by D233. The tract at residues 336-344 is interaction with PCNA; sequence TQVRLDSFF. The interval 354–386 is disordered; the sequence is VNAAKRKAEEAKKSANNKKAKTSGGAARGRRPK.

The protein belongs to the XPG/RAD2 endonuclease family. FEN1 subfamily. As to quaternary structure, interacts with PCNA. Three molecules of FEN1 bind to one PCNA trimer with each molecule binding to one PCNA monomer. PCNA stimulates the nuclease activity without altering cleavage specificity. It depends on Mg(2+) as a cofactor. Phosphorylated. Phosphorylation upon DNA damage induces relocalization to the nuclear plasma.

It localises to the nucleus. The protein localises to the nucleolus. The protein resides in the nucleoplasm. It is found in the mitochondrion. Its function is as follows. Structure-specific nuclease with 5'-flap endonuclease and 5'-3' exonuclease activities involved in DNA replication and repair. During DNA replication, cleaves the 5'-overhanging flap structure that is generated by displacement synthesis when DNA polymerase encounters the 5'-end of a downstream Okazaki fragment. It enters the flap from the 5'-end and then tracks to cleave the flap base, leaving a nick for ligation. Also involved in the long patch base excision repair (LP-BER) pathway, by cleaving within the apurinic/apyrimidinic (AP) site-terminated flap. Acts as a genome stabilization factor that prevents flaps from equilibrating into structures that lead to duplications and deletions. Also possesses 5'-3' exonuclease activity on nicked or gapped double-stranded DNA, and exhibits RNase H activity. Also involved in replication and repair of rDNA and in repairing mitochondrial DNA. In Drosophila pseudoobscura pseudoobscura (Fruit fly), this protein is Flap endonuclease 1.